Here is a 447-residue protein sequence, read N- to C-terminus: NAC domain containing protein 50 (447 aa).

The interval 1–21 is disordered; that stretch reads MGRESLAVVSSPPSATAPSTA. The region spanning 27-178 is the NAC domain; the sequence is LAPGFRFHPT…AYVLCRVFHK (152 aa). Residues 126 to 184 mediate DNA binding; that stretch reads LGMKKTLVFHSGRAPDGLRTNWVMHEYRLVEYETETNGSLLQDAYVLCRVFHKNNIGPP. 2 disordered regions span residues 246-303 and 371-392; these read DATP…NKEA and KENQQKEETSPPSPIASPEEKV. A compositionally biased stretch (basic and acidic residues) spans 281 to 293; sequence TLKREHAEEDERP. A coiled-coil region spans residues 392–447; that stretch reads VNDLQKEVHQMSVERETFKLEMMSAEAMISILQSRIDALRQENEELKKKNASGQAS.

Interacts with JMJ14 and NAC052. As to expression, mostly expressed in floral organs, and, at low levels, in other organs.

Its subcellular location is the nucleus. Functionally, transcriptional repressor that binds to the motif 5'-(C/T)A(C/A)G-3' in the promoter of target genes. Also binds to the 5'-CTTGNNNNNCAAG-3' consensus sequence in chromatin. Can bind to the mitochondrial dysfunction motif (MDM) present in the upstream regions of mitochondrial dysfunction stimulon (MDS) genes involved in mitochondrial retrograde regulation (MRR). Together with NAC051/NAC052 and JMJ14, regulates gene expression and flowering time by associating with the histone demethylase JMJ14, probably by the promotion of RNA-mediated gene silencing. This Arabidopsis thaliana (Mouse-ear cress) protein is NAC domain containing protein 50.